The chain runs to 210 residues: ATP phosphoribosyltransferase (210 aa).

It belongs to the ATP phosphoribosyltransferase family. Short subfamily. Heteromultimer composed of HisG and HisZ subunits.

The protein resides in the cytoplasm. The catalysed reaction is 1-(5-phospho-beta-D-ribosyl)-ATP + diphosphate = 5-phospho-alpha-D-ribose 1-diphosphate + ATP. Its pathway is amino-acid biosynthesis; L-histidine biosynthesis; L-histidine from 5-phospho-alpha-D-ribose 1-diphosphate: step 1/9. Functionally, catalyzes the condensation of ATP and 5-phosphoribose 1-diphosphate to form N'-(5'-phosphoribosyl)-ATP (PR-ATP). Has a crucial role in the pathway because the rate of histidine biosynthesis seems to be controlled primarily by regulation of HisG enzymatic activity. This Picosynechococcus sp. (strain ATCC 27264 / PCC 7002 / PR-6) (Agmenellum quadruplicatum) protein is ATP phosphoribosyltransferase.